The chain runs to 192 residues: Orotate phosphoribosyltransferase (192 aa).

116–124 (EDIVTTGLS) lines the 5-phospho-alpha-D-ribose 1-diphosphate pocket. 2 residues coordinate orotate: Thr120 and Arg148.

It belongs to the purine/pyrimidine phosphoribosyltransferase family. PyrE subfamily. As to quaternary structure, homodimer. Mg(2+) is required as a cofactor.

It catalyses the reaction orotidine 5'-phosphate + diphosphate = orotate + 5-phospho-alpha-D-ribose 1-diphosphate. The protein operates within pyrimidine metabolism; UMP biosynthesis via de novo pathway; UMP from orotate: step 1/2. Functionally, catalyzes the transfer of a ribosyl phosphate group from 5-phosphoribose 1-diphosphate to orotate, leading to the formation of orotidine monophosphate (OMP). This is Orotate phosphoribosyltransferase from Bartonella quintana (strain Toulouse) (Rochalimaea quintana).